Reading from the N-terminus, the 131-residue chain is Large ribosomal subunit protein bL12 (131 aa).

This sequence belongs to the bacterial ribosomal protein bL12 family. In terms of assembly, homodimer. Part of the ribosomal stalk of the 50S ribosomal subunit. Forms a multimeric L10(L12)X complex, where L10 forms an elongated spine to which 2 to 4 L12 dimers bind in a sequential fashion. Binds GTP-bound translation factors.

Forms part of the ribosomal stalk which helps the ribosome interact with GTP-bound translation factors. Is thus essential for accurate translation. This Tropheryma whipplei (strain Twist) (Whipple's bacillus) protein is Large ribosomal subunit protein bL12.